A 535-amino-acid polypeptide reads, in one-letter code: Serum response factor-binding protein 1 (535 aa).

Coiled-coil stretches lie at residues 5-27 (LNLNNEVVKLRKDVKKVKVLIIR) and 107-177 (LKQK…EKCK). Composition is skewed to basic and acidic residues over residues 128 to 151 (AAEGEREREKDEPEQVTKIKETKK), 159 to 191 (KNTEEIKSAKEHVKEEKCKNLLEDSDKGTEKAL), 205 to 325 (AENK…ERPV), 361 to 376 (DKEKEYFDDSTEERFY), 406 to 432 (SDKDGSKQKEEKVPPTKEKAQTSEVQK), and 460 to 472 (TKRETNFRQERNK). 2 disordered regions span residues 128-435 (AAEG…KEIP) and 453-535 (TKPK…VFDD).

The protein localises to the cytoplasm. The protein resides in the perinuclear region. Its function is as follows. May be involved in regulating transcriptional activation of cardiac genes during the aging process. May play a role in biosynthesis and/or processing of SLC2A4 in adipose cells. This chain is Serum response factor-binding protein 1, found in Xenopus tropicalis (Western clawed frog).